Reading from the N-terminus, the 514-residue chain is Peptide chain release factor 3 (514 aa).

The 261-residue stretch at 8 to 268 folds into the tr-type G domain; that stretch reads KKRRTFAIIS…TFLEFAPEPH (261 aa). Residues 17-24, 85-89, and 139-142 contribute to the GTP site; these read SHPDAGKT, DTPGH, and NKLD.

Belongs to the TRAFAC class translation factor GTPase superfamily. Classic translation factor GTPase family. PrfC subfamily.

Its subcellular location is the cytoplasm. In terms of biological role, increases the formation of ribosomal termination complexes and stimulates activities of RF-1 and RF-2. It binds guanine nucleotides and has strong preference for UGA stop codons. It may interact directly with the ribosome. The stimulation of RF-1 and RF-2 is significantly reduced by GTP and GDP, but not by GMP. This chain is Peptide chain release factor 3, found in Streptococcus uberis (strain ATCC BAA-854 / 0140J).